The primary structure comprises 563 residues: Inorganic phosphate transporter PT2 (563 aa).

Disordered stretches follow at residues 1–51 (MAPR…SGEE) and 67–96 (DGGA…PAYS). At 1 to 127 (MAPRYHSAAE…NGEKQSLLVP (127 aa)) the chain is on the extracellular side. A helical transmembrane segment spans residues 128–148 (CLAVFSSNYNFTVTSIALFLM). The Cytoplasmic portion of the chain corresponds to 149–168 (NQDPLYKDASDTVVGSSTVK). Residues 169–189 (MLSYAGAIVGMCTMGYLGDLI) traverse the membrane as a helical segment. Residues 190–192 (GRR) are Extracellular-facing. Residues 193–213 (LAMILTLALVFIGALLSSICA) form a helical membrane-spanning segment. The Cytoplasmic portion of the chain corresponds to 214 to 217 (WGDG). A helical transmembrane segment spans residues 218 to 238 (VTVLVIMGVCRFVLGVGSGGV). Over 239–263 (YPLSAVSAAEGAGSEKSNDRSMRVS) the chain is Extracellular. A helical membrane pass occupies residues 264–284 (WAYSMNVPGIMFPYIVALVLW). Over 285-291 (CTTHNVD) the chain is Cytoplasmic. Residues 292–312 (VCFRILLGFGALPALLIWLPA) traverse the membrane as a helical segment. The Extracellular segment spans residues 313–342 (WRMKEDRAYVAKDFAKHLAGVFVSRSYWRQ). Residues 343–363 (LLGTGVCWLLYDVTAYGILLV) traverse the membrane as a helical segment. Over 364 to 380 (QPEITQSIWGNSSSVTD) the chain is Cytoplasmic. A helical transmembrane segment spans residues 381–401 (VIWQNIILNGMGIPGCFMGIL). Over 402–412 (VLKQMGVKWLQ) the chain is Extracellular. Residues 413 to 433 (FWGFVGLAVSAFLMAATVEIL) form a helical membrane-spanning segment. Over 434 to 440 (QGKAWAQ) the chain is Cytoplasmic. A helical membrane pass occupies residues 441–461 (LVLLCIVNFFINWGASITTFI). At 462-477 (LPSLVFPPEVRSTYSG) the chain is on the extracellular side. The chain crosses the membrane as a helical span at residues 478–498 (ISAALGKIGAVGGIYTMKAIL). The Cytoplasmic segment spans residues 499-504 (STGGLT). The chain crosses the membrane as a helical span at residues 505–525 (PMMICAGVPSLAAAILTWFYV). Residues 526 to 563 (DPVPNTLRSSFLQCFGSLAGSCPFIDCRKFRRGSRAFE) lie on the Extracellular side of the membrane.

The protein belongs to the major facilitator superfamily. Phosphate:H(+) symporter (TC 2.A.1.9) family.

It is found in the cell membrane. The enzyme catalyses phosphate(in) = phosphate(out). Inorganic phosphate transporter. Activity is likely sodium-independent. Exhibits higher activity under acidic pH, implying that either the monovalent form of phosphate is the preferred substrate or the transport activity is H(+)-dependent. This Toxoplasma gondii (strain ATCC 50861 / VEG) protein is Inorganic phosphate transporter PT2.